A 50-amino-acid chain; its full sequence is Single-stranded DNA-binding protein (50 aa).

Homodimer in the absence of DNA, monomer when binding DNA.

Its function is as follows. Binds preferentially to single-stranded DNA and therefore, destabilizes double-stranded DNA. It is involved in DNA replication, repair and recombination. Binds ss-DNA as the replication fork advances and stimulates the replisome processivity and accuracy. This Enterobacteria phage RB27 (Bacteriophage RB27) protein is Single-stranded DNA-binding protein (32).